The chain runs to 702 residues: Cytolytic toxin-beta (702 aa).

A structural MACPF/CDC pore-forming domain region spans residues 2–264 (PSDILVVAAL…EAPQLMADSS (263 aa)). N94, N101, and N286 each carry an N-linked (GlcNAc...) asparagine glycan. The segment at 265–387 (TPILRKVRNT…DIIEEAKHKV (123 aa)) is structural FAT domain. The interval 388–515 (VLSKSQMARE…PRIPPVETIQ (128 aa)) is thioredoxin (THX) domain. One can recognise a B30.2/SPRY domain in the interval 504–702 (SNPRIPPVET…ANGQIKLKGE (199 aa)).

It belongs to the SNTX/VTX toxin family. As to quaternary structure, heterodimer of alpha and beta subunits; non-covalently linked. Also associates into tetramers or even higher aggregates. In terms of processing, intrachain disulfide bonds may be present in the heterodimer. In terms of tissue distribution, expressed by the venom gland.

It localises to the secreted. Functionally, this heterodimer induces potent hemolytic activities (when tested on rabbit erythrocytes, EC(50)=25-56 ng/mL) due to its ability to form pores in the cell membrane. The pore may be composed of 10 alpha/beta heterodimers. The toxin shows cardiovascular effects that include a vasorelaxant action that may involve the L-arginine-nitric oxid synthase pathway. In addition, it displays edema-inducing activities, increases vascular permeability. It also shows myotoxic activities and interferes irreversibly with neuromuscular function. It also induces irreversible platelet aggregation in rabbit or rat (but not in human or mouse) whole blood. In addition, it has been observed to increase spontaneous quantal acetylcholine release from isolated frog cutaneous pectoris motor endings. The protein is Cytolytic toxin-beta of Scorpaena plumieri (Spotted scorpionfish).